Reading from the N-terminus, the 315-residue chain is Prephenate dehydratase (315 aa).

The Prephenate dehydratase domain maps to 3-190 (RIAYLGPQGT…ARTRFVLVGR (188 aa)). The ACT domain occupies 204–281 (SVALRLPNTP…EDVRYLGSWP (78 aa)).

Homodimer.

It carries out the reaction prephenate + H(+) = 3-phenylpyruvate + CO2 + H2O. It participates in amino-acid biosynthesis; L-phenylalanine biosynthesis; phenylpyruvate from prephenate: step 1/1. The protein is Prephenate dehydratase (pheA) of Mycobacterium sp. (strain JLS).